The chain runs to 196 residues: Small ribosomal subunit protein uS4c (196 aa).

Residues 17-38 (ALPGLTRKTPKSRSNLKKKFHS) are disordered. A compositionally biased stretch (basic residues) spans 24-38 (KTPKSRSNLKKKFHS). The S4 RNA-binding domain occupies 89 to 169 (MRLDNILFRL…LPKHLTIDTL (81 aa)).

The protein belongs to the universal ribosomal protein uS4 family. Part of the 30S ribosomal subunit. Contacts protein S5. The interaction surface between S4 and S5 is involved in control of translational fidelity.

It is found in the plastid. The protein localises to the chloroplast. In terms of biological role, one of the primary rRNA binding proteins, it binds directly to 16S rRNA where it nucleates assembly of the body of the 30S subunit. Functionally, with S5 and S12 plays an important role in translational accuracy. The protein is Small ribosomal subunit protein uS4c (rps4) of Lygeum spartum.